The sequence spans 432 residues: Homogentisate 1,2-dioxygenase (432 aa).

3 residues coordinate Fe cation: His-333, Glu-339, and His-369.

This sequence belongs to the homogentisate dioxygenase family. Fe cation is required as a cofactor.

The enzyme catalyses homogentisate + O2 = 4-maleylacetoacetate + H(+). It functions in the pathway amino-acid degradation; L-phenylalanine degradation; acetoacetate and fumarate from L-phenylalanine: step 4/6. This Dictyostelium discoideum (Social amoeba) protein is Homogentisate 1,2-dioxygenase (hgd).